We begin with the raw amino-acid sequence, 425 residues long: G protein-activated inward rectifier potassium channel 2 (425 aa).

At 1-91 (MTMAKLTESM…IFTTLVDLKW (91 aa)) the chain is on the cytoplasmic side. Ser-18 and Ser-25 each carry phosphoserine. The helical transmembrane segment at 92–116 (RFNLLIFVMVYTVTWLFFGMIWWLI) threads the bilayer. At 117–140 (AYIRGDMDHIEDPSWTPCVTNLNG) the chain is on the extracellular side. Residues 141 to 152 (FVSAFLFSIETE) constitute an intramembrane region (helical; Pore-forming). The segment at residues 153–159 (TTIGYGY) is an intramembrane region (pore-forming). The Selectivity filter motif lies at 154–159 (TIGYGY). Topologically, residues 160 to 168 (RVITDKCPE) are extracellular. The chain crosses the membrane as a helical span at residues 169 to 190 (GIILLLIQSVLGSIVNAFMVGC). Residues 191-425 (MFVKISQPKK…VANLENESKV (235 aa)) are Cytoplasmic-facing. Residues 392–425 (NQHAELETEEEEKNPEELTERNGDVANLENESKV) are disordered. Residues 422-425 (ESKV) carry the PDZ-binding motif.

This sequence belongs to the inward rectifier-type potassium channel (TC 1.A.2.1) family. KCNJ6 subfamily. As to quaternary structure, associates with KCNJ3/GIRK1 or KCNJ5/GRIK4 to form a G-protein-activated heteromultimer pore-forming unit. The resulting inward current is much larger. Interacts (via PDZ-binding motif) with SNX27 (via PDZ domain); the interaction is required for recycling to the plasma membrane when endocytosed and prevent degradation in lysosomes. Pancreatic beta cells and brain.

The protein resides in the membrane. The enzyme catalyses K(+)(in) = K(+)(out). Its activity is regulated as follows. Activated by phosphatidylinositol 4,5 biphosphate (PtdIns(4,5)P2). In terms of biological role, inward rectifier potassium channels are characterized by a greater tendency to allow potassium to flow into the cell rather than out of it. Their voltage dependence is regulated by the concentration of extracellular potassium; as external potassium is raised, the voltage range of the channel opening shifts to more positive voltages. The inward rectification is mainly due to the blockage of outward current by internal magnesium. This potassium channel may be involved in the regulation of insulin secretion by glucose and/or neurotransmitters acting through G-protein-coupled receptors. The chain is G protein-activated inward rectifier potassium channel 2 (Kcnj6) from Rattus norvegicus (Rat).